The following is a 507-amino-acid chain: Transcription factor SOX-9 (507 aa).

Disordered stretches follow at residues 1–67 and 160–250; these read MNLL…SEED and RLRV…AGKV. Over residues 30–41 the composition is skewed to low complexity; the sequence is SAGSPCPSGSGS. Residues 42-52 are compositionally biased toward polar residues; it reads DTENTRPQENT. 2 stretches are compositionally biased toward basic and acidic residues: residues 56-67 and 160-174; these read GEPDLKKESEED and RLRV…DYKY. The tract at residues 63 to 103 is dimerization (DIM); that stretch reads ESEEDKFPVCIREAVSQVLKGYDWTLVPMPVRVNGSSKNKP. The tract at residues 63 to 103 is PQA; that stretch reads ESEEDKFPVCIREAVSQVLKGYDWTLVPMPVRVNGSSKNKP. The residue at position 64 (S64) is a Phosphoserine; by PKA. A DNA-binding region (HMG box) is located at residues 105–173; it reads VKRPMNAFMV…QHKKDHPDYK (69 aa). S211 is modified (phosphoserine; by PKA). The interval 224–307 is transactivation domain (TAM); the sequence is PGEHSGQSQG…LPPNGHPGVP (84 aa). 2 short sequence motifs (9aaTAD) span residues 275 to 284 and 290 to 298; these read IGELSSDVIS and DVNEFDQYL. The interval 335-429 is disordered; the sequence is WMSKQQAPPP…PFNLPHYSPS (95 aa). Residues 341–369 are compositionally biased toward pro residues; that stretch reads APPPPPQQPPQAPQAPQAPPQQQAPPQQP. Residues 378-420 are compositionally biased toward polar residues; the sequence is HTLTTLSSEPGQSQRTHIKTEQLSPSHYSEQQQHSPQQISYSP. The segment at 392–507 is transactivation domain (TAC); the sequence is RTHIKTEQLS…QPVYTQLTRP (116 aa). K396 is covalently cross-linked (Glycyl lysine isopeptide (Lys-Gly) (interchain with G-Cter in ubiquitin)). The short motif at 458 to 466 is the 9aaTAD 3 element; it reads SGLYSTFTY. The tract at residues 477-507 is disordered; that stretch reads PIADTSGVPSIPQTHSPQHWEQPVYTQLTRP. Positions 483–507 are enriched in polar residues; it reads GVPSIPQTHSPQHWEQPVYTQLTRP.

As to quaternary structure, homodimer; homodimerization is required for activity. Interacts (via C-terminus) with ZNF219; forming a complex that binds to the COL2A1 promoter and activates COL2A1 expression. Interacts with DDRGK1. Interacts with EP300/p300. Interacts with beta-catenin (CTNNB1); inhibiting CTNNB1 activity by competing with the binding sites of TCF/LEF within CTNNB1. In terms of processing, acetylated; acetylation impairs nuclear localization and ability to transactivate expression of target genes. Deacetylated by SIRT1. Phosphorylation at Ser-64 and Ser-211 by PKA increases transcriptional activity and may help delay chondrocyte maturation downstream of PTHLH/PTHrP signaling. Phosphorylation at either Ser-64 or Ser-211 is required for sumoylation, but phosphorylation is not dependent on sumoylation. Phosphorylated on tyrosine residues; tyrosine dephosphorylation by PTPN11/SHP2 blocks SOX9 phosphorylation by PKA and subsequent SUMOylation. Post-translationally, sumoylated; phosphorylation at either Ser-64 or Ser-211 is required for sumoylation. Sumoylation is induced by BMP signaling pathway. In terms of processing, ubiquitinated; ubiquitination leads to proteasomal degradation and is negatively regulated by DDRGK1. Expressed in the intestinal epithelium (at protein level). Expressed in progenitor cells in various organs, including chondroprogenitors, osteoprogenitors and preadipocytes, but is not expressed in most differentiated cell types such as osteoblasts and adipocytes, with the exception of chondrocytes. Highly expressed in developing chondrogenic tissues. Also expressed in some non-chondrogenic tissues such as notochord, otic vesicle and neural tube.

It is found in the nucleus. Functionally, transcription factor that plays a key role in chondrocytes differentiation and skeletal development. Specifically binds the 5'-ACAAAG-3' DNA motif present in enhancers and super-enhancers and promotes expression of genes important for chondrogenesis, including cartilage matrix protein-coding genes COL2A1, COL4A2, COL9A1, COL11A2 and ACAN, SOX5 and SOX6. Also binds to some promoter regions. Plays a central role in successive steps of chondrocyte differentiation. Absolutely required for precartilaginous condensation, the first step in chondrogenesis during which skeletal progenitors differentiate into prechondrocytes. Together with SOX5 and SOX6, required for overt chondrogenesis when condensed prechondrocytes differentiate into early stage chondrocytes, the second step in chondrogenesis. Later, required to direct hypertrophic maturation and block osteoblast differentiation of growth plate chondrocytes: maintains chondrocyte columnar proliferation, delays prehypertrophy and then prevents osteoblastic differentiation of chondrocytes by lowering beta-catenin (CTNNB1) signaling and RUNX2 expression. Also required for chondrocyte hypertrophy, both indirectly, by keeping the lineage fate of chondrocytes, and directly, by remaining present in upper hypertrophic cells and transactivating COL10A1 along with MEF2C. Low lipid levels are the main nutritional determinant for chondrogenic commitment of skeletal progenitor cells: when lipids levels are low, FOXO (FOXO1 and FOXO3) transcription factors promote expression of SOX9, which induces chondrogenic commitment and suppresses fatty acid oxidation. Mechanistically, helps, but is not required, to remove epigenetic signatures of transcriptional repression and deposit active promoter and enhancer marks at chondrocyte-specific genes. Acts in cooperation with the Hedgehog pathway-dependent GLI (GLI1 and GLI3) transcription factors. In addition to cartilage development, also acts as a regulator of proliferation and differentiation in epithelial stem/progenitor cells: involved in the lung epithelium during branching morphogenesis, by balancing proliferation and differentiation and regulating the extracellular matrix. Controls epithelial branching during kidney development. The polypeptide is Transcription factor SOX-9 (Mus musculus (Mouse)).